Reading from the N-terminus, the 391-residue chain is Galactokinase (391 aa).

34–37 (EHTD) contributes to the substrate binding site. Residue 121-127 (GAGLSSS) coordinates ATP. Mg(2+) is bound by residues Ser-127 and Glu-159. Asp-171 serves as the catalytic Proton acceptor. Tyr-220 serves as a coordination point for substrate.

Belongs to the GHMP kinase family. GalK subfamily.

Its subcellular location is the cytoplasm. It catalyses the reaction alpha-D-galactose + ATP = alpha-D-galactose 1-phosphate + ADP + H(+). Its pathway is carbohydrate metabolism; galactose metabolism. Catalyzes the transfer of the gamma-phosphate of ATP to D-galactose to form alpha-D-galactose-1-phosphate (Gal-1-P). The sequence is that of Galactokinase from Roseiflexus sp. (strain RS-1).